A 257-amino-acid polypeptide reads, in one-letter code: Imidazole glycerol phosphate synthase subunit HisF (257 aa).

Catalysis depends on residues Asp-11 and Asp-130.

This sequence belongs to the HisA/HisF family. In terms of assembly, heterodimer of HisH and HisF.

The protein localises to the cytoplasm. It catalyses the reaction 5-[(5-phospho-1-deoxy-D-ribulos-1-ylimino)methylamino]-1-(5-phospho-beta-D-ribosyl)imidazole-4-carboxamide + L-glutamine = D-erythro-1-(imidazol-4-yl)glycerol 3-phosphate + 5-amino-1-(5-phospho-beta-D-ribosyl)imidazole-4-carboxamide + L-glutamate + H(+). It functions in the pathway amino-acid biosynthesis; L-histidine biosynthesis; L-histidine from 5-phospho-alpha-D-ribose 1-diphosphate: step 5/9. Its function is as follows. IGPS catalyzes the conversion of PRFAR and glutamine to IGP, AICAR and glutamate. The HisF subunit catalyzes the cyclization activity that produces IGP and AICAR from PRFAR using the ammonia provided by the HisH subunit. The chain is Imidazole glycerol phosphate synthase subunit HisF from Aliivibrio salmonicida (strain LFI1238) (Vibrio salmonicida (strain LFI1238)).